Consider the following 263-residue polypeptide: Receptor-transporting protein 1 (263 aa).

Residues 1–238 (MRIFRPWRLR…QTGSGWNFCS (238 aa)) lie on the Cytoplasmic side of the membrane. A 3CxxC-type zinc finger spans residues 88–197 (ASGRFHCSWC…GEFCEACQEG (110 aa)). The helical transmembrane segment at 239–259 (IPWCLFWATVLLLIIYLQFSF) threads the bilayer. At 260–263 (RSSV) the chain is on the extracellular side.

The protein belongs to the TMEM7 family. As to quaternary structure, interacts with olfactory receptors. As to expression, expressed in testis.

It localises to the cell membrane. Functionally, specifically promotes functional cell surface expression of olfactory receptors, but not of other GPCRs. In Homo sapiens (Human), this protein is Receptor-transporting protein 1 (RTP1).